The following is a 66-amino-acid chain: Large ribosomal subunit protein bL33c (66 aa).

It belongs to the bacterial ribosomal protein bL33 family.

The protein localises to the plastid. Its subcellular location is the chloroplast. This chain is Large ribosomal subunit protein bL33c, found in Lobularia maritima (Sweet alyssum).